The chain runs to 1337 residues: Phosphoribosylformylglycinamidine synthase (1337 aa).

Residue serine 215 is modified to Phosphoserine. Residues 322–333 (GATTGTGGRIRD) and 402–404 (AGF) contribute to the ATP site. Residues threonine 619 and threonine 622 each carry the phosphothreonine modification. An ATP-binding site is contributed by alanine 705. Mg(2+) is bound by residues aspartate 706, glutamate 745, asparagine 749, and aspartate 908. An ATP-binding site is contributed by serine 910. Residues 1063 to 1301 (RVAILREEGS…ALMPHPERAV (239 aa)) enclose the Glutamine amidotransferase type-1 domain. Cysteine 1157 functions as the Nucleophile in the catalytic mechanism. Catalysis depends on residues histidine 1296 and glutamate 1298.

It in the N-terminal section; belongs to the FGAMS family.

It is found in the cytoplasm. It catalyses the reaction N(2)-formyl-N(1)-(5-phospho-beta-D-ribosyl)glycinamide + L-glutamine + ATP + H2O = 2-formamido-N(1)-(5-O-phospho-beta-D-ribosyl)acetamidine + L-glutamate + ADP + phosphate + H(+). The protein operates within purine metabolism; IMP biosynthesis via de novo pathway; 5-amino-1-(5-phospho-D-ribosyl)imidazole from N(2)-formyl-N(1)-(5-phospho-D-ribosyl)glycinamide: step 1/2. Its function is as follows. Phosphoribosylformylglycinamidine synthase involved in the purines biosynthetic pathway. Catalyzes the ATP-dependent conversion of formylglycinamide ribonucleotide (FGAR) and glutamine to yield formylglycinamidine ribonucleotide (FGAM) and glutamate. The chain is Phosphoribosylformylglycinamidine synthase (Pfas) from Mus musculus (Mouse).